The following is a 64-amino-acid chain: Small hydrophobic protein (64 aa).

Residues 6–15 (ITIEFSSKFW) form an interaction with host BCAP31 region. Residues 20–40 (LIHMITTIISLLIIISIMTAI) form a helical membrane-spanning segment. An interaction with small-molecule inhibitor region spans residues 38–43 (TAILNK). N52 carries an N-linked (GlcNAc...) asparagine; by host glycan.

This sequence belongs to the orthopneumovirus small hydrophobic protein family. In terms of assembly, homopentamer forming a funnel-like pore. Interacts with glycoprotein G; this interaction occurs on the surface of virion particles and infected cells. Interacts with host BCAP31 (via C-terminus); this interaction is direct. In terms of processing, four species of SH have been detected in infected cell cytoplasm: a 7.5 kDa non-glycosylated form (SH0), a 13-15 kDa form that contains one or two N-linked carbohydrate side chains of the high-mannose type (SHg), a 21-30 kDa polylactosaminoglycan-modified form of the protein (SHp), and the isoform generated by alternative translational initiation. Of these different forms, SH0 is by far the most abundant protein detected during virus infection. Tyrosine phosphorylated.

It is found in the virion membrane. Its subcellular location is the host cell membrane. The protein localises to the host Golgi apparatus membrane. The protein resides in the host endoplasmic reticulum membrane. Channel activity is inhibited by copper. Also inhibited by small-molecule pyronin B. Viroporin that forms a homopentameric ion channel displaying low ion selectivity. May play a role in virus morphogenesis and pathogenicity at various stages of the viral life cycle. Accumulates at the membrane of the Golgi apparatus in infected cells and may facilitate virus release by modifying the secretory pathway. May enhance host membrane permeability and disrupt cellular ion homeostasis, which can be sensed as damage-associated molecular patterns/danger signals, triggering NLRP3 inflammasome activation and inflammatory immune response. Also inhibits host TNFA-mediated signaling pathway and may delay apoptosis, allowing time for the virus to replicate. The chain is Small hydrophobic protein (SH) from Homo sapiens (Human).